The primary structure comprises 446 residues: Tubulin beta-3 chain (446 aa).

8 residues coordinate GTP: Gln11, Glu69, Ser138, Gly142, Thr143, Gly144, Asn204, and Asn226. Mg(2+) is bound at residue Glu69. The segment at 421–446 (EYQQYQDATAEEEDYEEEEEDEEVAA) is disordered. Positions 429-446 (TAEEEDYEEEEEDEEVAA) are enriched in acidic residues.

The protein belongs to the tubulin family. As to quaternary structure, dimer of alpha and beta chains. A typical microtubule is a hollow water-filled tube with an outer diameter of 25 nm and an inner diameter of 15 nM. Alpha-beta heterodimers associate head-to-tail to form protofilaments running lengthwise along the microtubule wall with the beta-tubulin subunit facing the microtubule plus end conferring a structural polarity. Microtubules usually have 13 protofilaments but different protofilament numbers can be found in some organisms and specialized cells. It depends on Mg(2+) as a cofactor. Expressed in roots, second node, leaf sheaths, and suspension cultured cells.

It localises to the cytoplasm. The protein resides in the cytoskeleton. Functionally, tubulin is the major constituent of microtubules, a cylinder consisting of laterally associated linear protofilaments composed of alpha- and beta-tubulin heterodimers. Microtubules grow by the addition of GTP-tubulin dimers to the microtubule end, where a stabilizing cap forms. Below the cap, tubulin dimers are in GDP-bound state, owing to GTPase activity of alpha-tubulin. The protein is Tubulin beta-3 chain (TUBB3) of Oryza sativa subsp. japonica (Rice).